A 160-amino-acid polypeptide reads, in one-letter code: Putative 4-hydroxy-4-methyl-2-oxoglutarate aldolase (160 aa).

Residues 76-79 (GGNL) and arginine 98 each bind substrate. Aspartate 99 is a binding site for a divalent metal cation.

This sequence belongs to the class II aldolase/RraA-like family. In terms of assembly, homotrimer. The cofactor is a divalent metal cation.

The enzyme catalyses 4-hydroxy-4-methyl-2-oxoglutarate = 2 pyruvate. It catalyses the reaction oxaloacetate + H(+) = pyruvate + CO2. Catalyzes the aldol cleavage of 4-hydroxy-4-methyl-2-oxoglutarate (HMG) into 2 molecules of pyruvate. Also contains a secondary oxaloacetate (OAA) decarboxylase activity due to the common pyruvate enolate transition state formed following C-C bond cleavage in the retro-aldol and decarboxylation reactions. The polypeptide is Putative 4-hydroxy-4-methyl-2-oxoglutarate aldolase (Deinococcus radiodurans (strain ATCC 13939 / DSM 20539 / JCM 16871 / CCUG 27074 / LMG 4051 / NBRC 15346 / NCIMB 9279 / VKM B-1422 / R1)).